We begin with the raw amino-acid sequence, 175 residues long: 19.0 kDa class II heat shock protein (175 aa).

One can recognise a sHSP domain in the interval 42–165 (DRRAMANTPM…KPRVVEVKVA (124 aa)). A disordered region spans residues 145–175 (TVDKKPPPEPKKPRVVEVKVAGAGEPKGKGK). Over residues 146–161 (VDKKPPPEPKKPRVVE) the composition is skewed to basic and acidic residues.

The protein belongs to the small heat shock protein (HSP20) family. In terms of assembly, may form oligomeric structures.

Its subcellular location is the cytoplasm. The protein is 19.0 kDa class II heat shock protein (HSP19.0) of Oryza sativa subsp. japonica (Rice).